Here is a 116-residue protein sequence, read N- to C-terminus: MAQSGVFLRNPGHLTSAPQAALLFSLVLTSFHLSCGTETSSSNSTLSAHHPDPGTLEQCANVDFCPLASLCCRASVDEYGWIAAAVGWSFWFLTLILLCVDKLMKLTPEEPKDLAA.

Positions 1-35 (MAQSGVFLRNPGHLTSAPQAALLFSLVLTSFHLSC) are cleaved as a signal peptide. At 36–79 (GTETSSSNSTLSAHHPDPGTLEQCANVDFCPLASLCCRASVDEY) the chain is on the extracellular side. The chain crosses the membrane as a helical span at residues 80–100 (GWIAAAVGWSFWFLTLILLCV). Over 101–116 (DKLMKLTPEEPKDLAA) the chain is Cytoplasmic.

The protein resides in the membrane. This Mus musculus (Mouse) protein is Transmembrane protein 213 (Tmem213).